Here is a 77-residue protein sequence, read N- to C-terminus: MNVFGIGLPELIVILVVALLIFGPKKLPEIGRSLGKTKRAFEEASREFQDEIKRQTAALEEEQQAKAEAESPREISP.

The chain crosses the membrane as a helical span at residues 3 to 23; it reads VFGIGLPELIVILVVALLIFG. The tract at residues 56–77 is disordered; that stretch reads TAALEEEQQAKAEAESPREISP. The span at 63 to 77 shows a compositional bias: basic and acidic residues; the sequence is QQAKAEAESPREISP.

It belongs to the TatA/E family. As to quaternary structure, forms a complex with TatC.

Its subcellular location is the cell inner membrane. Part of the twin-arginine translocation (Tat) system that transports large folded proteins containing a characteristic twin-arginine motif in their signal peptide across membranes. TatA could form the protein-conducting channel of the Tat system. The sequence is that of Sec-independent protein translocase protein TatA from Thermosynechococcus vestitus (strain NIES-2133 / IAM M-273 / BP-1).